Here is an 849-residue protein sequence, read N- to C-terminus: Membrane protein-large ribosomal subunit bL9 fusion protein (849 aa).

Positions 1–680 (MFSKNKHNTK…TQLEGTNIKT (680 aa)) are unknown. Transmembrane regions (helical) follow at residues 11-31 (FIVI…LDFQ) and 64-84 (IIFF…VISF). Residues 214–342 (KTLALAMITF…GGDQVVVNIE (129 aa)) enclose the GGDEF domain. Positions 681–849 (VTDTLKHFLK…FLNVTERKSK (169 aa)) are large ribosomal subunit protein bL9.

This sequence belongs to the bacterial ribosomal protein bL9 family.

It localises to the cell membrane. Its function is as follows. Binds to the 23S rRNA. The chain is Membrane protein-large ribosomal subunit bL9 fusion protein from Onion yellows phytoplasma (strain OY-M).